The primary structure comprises 158 residues: Regulator of sigma D (158 aa).

The protein belongs to the Rsd/AlgQ family. In terms of assembly, interacts with RpoD.

It is found in the cytoplasm. Its function is as follows. Binds RpoD and negatively regulates RpoD-mediated transcription activation by preventing the interaction between the primary sigma factor RpoD with the catalytic core of the RNA polymerase and with promoter DNA. May be involved in replacement of the RNA polymerase sigma subunit from RpoD to RpoS during the transition from exponential growth to the stationary phase. This chain is Regulator of sigma D, found in Shigella dysenteriae serotype 1 (strain Sd197).